The sequence spans 692 residues: Elongation factor G (692 aa).

Positions 8 to 282 constitute a tr-type G domain; the sequence is EKTRNIGIMA…AVVEYMPAPT (275 aa). GTP-binding positions include 17 to 24, 81 to 85, and 135 to 138; these read AHIDAGKT, DTPGH, and NKMD. Residues 285-304 are disordered; that stretch reads PNIKGVHPETGEADERHSSD. The segment covering 290–304 has biased composition (basic and acidic residues); that stretch reads VHPETGEADERHSSD.

Belongs to the TRAFAC class translation factor GTPase superfamily. Classic translation factor GTPase family. EF-G/EF-2 subfamily.

The protein resides in the cytoplasm. Catalyzes the GTP-dependent ribosomal translocation step during translation elongation. During this step, the ribosome changes from the pre-translocational (PRE) to the post-translocational (POST) state as the newly formed A-site-bound peptidyl-tRNA and P-site-bound deacylated tRNA move to the P and E sites, respectively. Catalyzes the coordinated movement of the two tRNA molecules, the mRNA and conformational changes in the ribosome. The chain is Elongation factor G from Desulfitobacterium hafniense (strain Y51).